Here is a 293-residue protein sequence, read N- to C-terminus: 4-hydroxy-tetrahydrodipicolinate synthase (293 aa).

Pyruvate is bound at residue T45. Y133 serves as the catalytic Proton donor/acceptor. Residue K162 is the Schiff-base intermediate with substrate of the active site. I204 is a binding site for pyruvate.

It belongs to the DapA family. As to quaternary structure, homotetramer; dimer of dimers.

Its subcellular location is the cytoplasm. The catalysed reaction is L-aspartate 4-semialdehyde + pyruvate = (2S,4S)-4-hydroxy-2,3,4,5-tetrahydrodipicolinate + H2O + H(+). Its pathway is amino-acid biosynthesis; L-lysine biosynthesis via DAP pathway; (S)-tetrahydrodipicolinate from L-aspartate: step 3/4. Its function is as follows. Catalyzes the condensation of (S)-aspartate-beta-semialdehyde [(S)-ASA] and pyruvate to 4-hydroxy-tetrahydrodipicolinate (HTPA). The chain is 4-hydroxy-tetrahydrodipicolinate synthase from Mesorhizobium japonicum (strain LMG 29417 / CECT 9101 / MAFF 303099) (Mesorhizobium loti (strain MAFF 303099)).